Reading from the N-terminus, the 324-residue chain is tRNA-modifying protein YgfZ (324 aa).

Residue Trp186 coordinates folate.

This sequence belongs to the tRNA-modifying YgfZ family.

It localises to the cytoplasm. Its function is as follows. Folate-binding protein involved in regulating the level of ATP-DnaA and in the modification of some tRNAs. It is probably a key factor in regulatory networks that act via tRNA modification, such as initiation of chromosomal replication. This Colwellia psychrerythraea (strain 34H / ATCC BAA-681) (Vibrio psychroerythus) protein is tRNA-modifying protein YgfZ.